The sequence spans 273 residues: Large ribosomal subunit protein uL2cz/uL2cy (273 aa).

Disordered regions lie at residues 1 to 27 (MAKHLYKTPIPSTRKGTVDRQVKSNPR) and 225 to 273 (PVDH…RRRK).

This sequence belongs to the universal ribosomal protein uL2 family. Part of the 50S ribosomal subunit.

It is found in the plastid. It localises to the chloroplast. The sequence is that of Large ribosomal subunit protein uL2cz/uL2cy (rpl2-A) from Lolium perenne (Perennial ryegrass).